The sequence spans 365 residues: Validamycin A dioxygenase (365 aa).

One can recognise a Fe2OG dioxygenase domain in the interval 174–284 (HATWTQSVNW…LVSLVYFFDA (111 aa)). Residues His-203, Asp-205, and His-261 each coordinate Fe cation. Positions 331 to 365 (GELSLSRPGSADSPGSSPADDHPSRPGRHPAQGPQ) are disordered. The segment covering 336-348 (SRPGSADSPGSSP) has biased composition (low complexity).

It belongs to the iron/ascorbate-dependent oxidoreductase family. Fe(2+) serves as cofactor.

The catalysed reaction is validamycin A + 2-oxoglutarate + O2 = validamycin B + succinate + CO2 + H(+). It carries out the reaction validoxylamine A + 2-oxoglutarate + O2 = validoxylamine B + succinate + CO2 + H(+). The protein operates within antibiotic biosynthesis. In terms of biological role, involved in the biosynthesis of validamycin B, a component of the antifungal and antibiotic validamycin complex used as a crop protectant. Catalyzes the regioselective hydroxylation of validamycin A (4-O-beta-D-glucopyranosyl-validoxylamine A) at the C-6 position to yield validamycin B. To a lesser extent, also able to convert validoxylamine A to its hydroxylated derivative. The polypeptide is Validamycin A dioxygenase (Streptomyces hygroscopicus subsp. limoneus).